Reading from the N-terminus, the 209-residue chain is Bcl-2 homologous antagonist/killer (209 aa).

Residues 1–28 (MASGQGPGPPKVGCDESPSPSEQQVAQD) form a disordered region. Ala2 is subject to N-acetylalanine. Residues 18 to 27 (PSPSEQQVAQ) show a composition bias toward polar residues. The short motif at 72–86 (VGRQLALIGDDINRR) is the BH3 element. A BH1 motif is present at residues 115–134 (SLFKSGISWGRVVALLGFGY). Asp158 and His162 together coordinate Zn(2+). The BH2 motif lies at 167-182 (RWIAQRGGWVAALNFR). Residues 186–203 (ILTVMVIFGVVLLGQFVV) traverse the membrane as a helical segment.

It belongs to the Bcl-2 family. In terms of assembly, homodimer. Formation of the homodimer is zinc-dependent. Forms heterodimers with BCL2 and BCL2L1 isoform Bcl-X(L). Forms heterooligomers with BAX. Interacts with BCL2A1. Interacts withRTL10/BOP. Interacts with VDAC1. Interacts with GIMAP3/IAN4 and GIMAP5/IAN5. As to quaternary structure, (Microbial infection) Interacts with gamma-herpesvirus 68 protein vBCL2. As to expression, widely expressed.

The protein resides in the mitochondrion outer membrane. In the presence of an appropriate stimulus, accelerates programmed cell death by binding to, and antagonizing the anti-apoptotic action of BCL2. The chain is Bcl-2 homologous antagonist/killer (Bak1) from Mus musculus (Mouse).